The chain runs to 536 residues: Membrane protein insertase YidC (536 aa).

A helical membrane pass occupies residues 14–34; the sequence is ILIATAISLLFFIPYSYFFAP. Residues 43 to 69 are disordered; the sequence is STSMERAEQQAAPQTSSSPKEGQVSSV. A compositionally biased stretch (polar residues) spans 53-68; the sequence is AAPQTSSSPKEGQVSS. 5 helical membrane passes run 312 to 332, 339 to 359, 401 to 421, 436 to 456, and 484 to 504; these read VVEY…LDWL, WGWA…PLTY, GANP…FFAI, WILW…PILM, and PLIF…YWFV.

Belongs to the OXA1/ALB3/YidC family. Type 1 subfamily. In terms of assembly, interacts with the Sec translocase complex via SecD. Specifically interacts with transmembrane segments of nascent integral membrane proteins during membrane integration.

Its subcellular location is the cell inner membrane. Required for the insertion and/or proper folding and/or complex formation of integral membrane proteins into the membrane. Involved in integration of membrane proteins that insert both dependently and independently of the Sec translocase complex, as well as at least some lipoproteins. Aids folding of multispanning membrane proteins. The polypeptide is Membrane protein insertase YidC (Wolinella succinogenes (strain ATCC 29543 / DSM 1740 / CCUG 13145 / JCM 31913 / LMG 7466 / NCTC 11488 / FDC 602W) (Vibrio succinogenes)).